Here is a 217-residue protein sequence, read N- to C-terminus: Ribose-5-phosphate isomerase A (217 aa).

Substrate is bound by residues 28–31 (TGST), 81–84 (DGAD), and 94–97 (KGGG). Catalysis depends on Glu-103, which acts as the Proton acceptor. A substrate-binding site is contributed by Lys-121.

It belongs to the ribose 5-phosphate isomerase family. As to quaternary structure, homodimer.

It catalyses the reaction aldehydo-D-ribose 5-phosphate = D-ribulose 5-phosphate. The protein operates within carbohydrate degradation; pentose phosphate pathway; D-ribose 5-phosphate from D-ribulose 5-phosphate (non-oxidative stage): step 1/1. Catalyzes the reversible conversion of ribose-5-phosphate to ribulose 5-phosphate. The protein is Ribose-5-phosphate isomerase A of Aeromonas hydrophila subsp. hydrophila (strain ATCC 7966 / DSM 30187 / BCRC 13018 / CCUG 14551 / JCM 1027 / KCTC 2358 / NCIMB 9240 / NCTC 8049).